The sequence spans 376 residues: Transcription factor Sp6 (376 aa).

Residues 1–70 are disordered; it reads MLTAVCGSLG…VDFSQGYELP (70 aa). The short motif at 118 to 126 is the 9aaTAD element; the sequence is GSWWDLHPG. The disordered stretch occupies residues 164-224; that stretch reads PPPHPHPHHL…SRRSVPRSSG (61 aa). C2H2-type zinc fingers lie at residues 254 to 278, 284 to 308, and 314 to 336; these read HNCH…LRWH, FVCN…LQTH, and FPCA…MKTH. The segment covering 334 to 343 has biased composition (basic and acidic residues); sequence KTHEGAKEEA. The disordered stretch occupies residues 334–376; the sequence is KTHEGAKEEAAAAAQGEGKAGGVVEPPGGKGKREAEGSSASSN. The segment covering 344–360 has biased composition (low complexity); it reads AAAAQGEGKAGGVVEPP.

This sequence belongs to the Sp1 C2H2-type zinc-finger protein family. As to expression, ubiquitous. Preferentially expressed by proliferating epithelial cells of teeth, hair follicles and limbs.

Its subcellular location is the nucleus. In terms of biological role, promotes cell proliferation. Plays a role in tooth germ growth. Plays a role in the control of enamel mineralization. Binds the AMBN promoter. This Mus musculus (Mouse) protein is Transcription factor Sp6 (Sp6).